Here is a 67-residue protein sequence, read N- to C-terminus: COP9 signalosome complex subunit 9 homolog (67 aa).

A disordered region spans residues 1–31 (MKPSLAADEMFSEGPGYMEMDESGGATGMMM).

Belongs to the CSN9 family. Probable component of the COP9 signalosome (CSN) complex.

Its function is as follows. Component of the COP9 signalosome complex (CSN), a complex involved in various cellular and developmental processes. The CSN complex is an essential regulator of the ubiquitin (Ubl) conjugation pathway by mediating the deneddylation of the cullin subunits of SCF-type E3 ligase complexes, leading to decrease the Ubl ligase activity. This chain is COP9 signalosome complex subunit 9 homolog, found in Drosophila melanogaster (Fruit fly).